We begin with the raw amino-acid sequence, 760 residues long: Colleterpenol synthase (760 aa).

The interval 14-335 (ASSGLRSKFR…YTRRYPSKAD (322 aa)) is terpene cyclase. Asp95 contributes to the Mg(2+) binding site. The DDXXD 1 signature appears at 95 to 99 (DDYYD). The NSE/DTE motif lies at 233 to 241 (NDLYSWPKE). The segment at 336-759 (LRQPEVEFVD…LELVLRRLWI (424 aa)) is prenyltransferase. The disordered stretch occupies residues 359 to 400 (EEKVVSESVESLPTTEVEDEFSSSDASPGSVDQAISTPPSTT). The segment covering 391 to 400 (QAISTPPSTT) has biased composition (polar residues). Isopentenyl diphosphate is bound by residues Lys477, Arg480, and His509. Positions 516 and 520 each coordinate Mg(2+). A DDXXD 2 motif is present at residues 516–520 (DDIED). A dimethylallyl diphosphate-binding site is contributed by Arg525. Isopentenyl diphosphate is bound at residue Arg526. 6 residues coordinate dimethylallyl diphosphate: Lys605, Thr606, Gln643, Asn650, Lys660, and Lys670.

In the N-terminal section; belongs to the terpene synthase family. The protein in the C-terminal section; belongs to the FPP/GGPP synthase family. Hexamer. It depends on Mg(2+) as a cofactor.

It catalyses the reaction 5 isopentenyl diphosphate + dimethylallyl diphosphate = all-trans-hexaprenyl diphosphate + 5 diphosphate. It carries out the reaction all-trans-hexaprenyl diphosphate + H2O = colleterpenol + diphosphate. In terms of biological role, bifunctional terpene synthase that converts dimethylallyl diphosphate (DMAPP) and isopentenyl diphosphate (IPP) into colleterpenol as a single product. The C-terminal prenyltransferase (PT) domain of CgCS catalyzes formation of hexaprenyl diphosphate (HexPP), whereas the N-terminal terpene cyclase (TC) domain catalyzes the cyclization of HexPP to colleterpenol. This Colletotrichum gloeosporioides (Anthracnose fungus) protein is Colleterpenol synthase.